The following is a 409-amino-acid chain: Argininosuccinate synthase (409 aa).

ATP is bound by residues 8–16 (AYSGGLDTS) and A34. Y85 lines the L-citrulline pocket. G115 provides a ligand contact to ATP. L-aspartate contacts are provided by T117, N121, and D122. Residue N121 participates in L-citrulline binding. L-citrulline is bound by residues R125, S178, S187, E268, and Y280.

It belongs to the argininosuccinate synthase family. Type 1 subfamily. Homotetramer.

The protein resides in the cytoplasm. The catalysed reaction is L-citrulline + L-aspartate + ATP = 2-(N(omega)-L-arginino)succinate + AMP + diphosphate + H(+). It participates in amino-acid biosynthesis; L-arginine biosynthesis; L-arginine from L-ornithine and carbamoyl phosphate: step 2/3. The sequence is that of Argininosuccinate synthase from Thermotoga maritima (strain ATCC 43589 / DSM 3109 / JCM 10099 / NBRC 100826 / MSB8).